A 323-amino-acid chain; its full sequence is Acetylglutamate kinase (323 aa).

Substrate-binding positions include 90-91, Arg-112, and Asn-218; that span reads GG.

The protein belongs to the acetylglutamate kinase family. ArgB subfamily.

Its subcellular location is the cytoplasm. The catalysed reaction is N-acetyl-L-glutamate + ATP = N-acetyl-L-glutamyl 5-phosphate + ADP. It functions in the pathway amino-acid biosynthesis; L-arginine biosynthesis; N(2)-acetyl-L-ornithine from L-glutamate: step 2/4. Functionally, catalyzes the ATP-dependent phosphorylation of N-acetyl-L-glutamate. The sequence is that of Acetylglutamate kinase from Ehrlichia canis (strain Jake).